We begin with the raw amino-acid sequence, 348 residues long: Probable dual-specificity RNA methyltransferase RlmN (348 aa).

Glu-89 acts as the Proton acceptor in catalysis. One can recognise a Radical SAM core domain in the interval 95–330 (ERDHYTLCVS…NFVRFSKGVE (236 aa)). A disulfide bond links Cys-102 and Cys-335. [4Fe-4S] cluster contacts are provided by Cys-109, Cys-113, and Cys-116. S-adenosyl-L-methionine-binding positions include 157–158 (GE), Ser-189, 214–216 (SLN), and Asn-292. Cys-335 serves as the catalytic S-methylcysteine intermediate.

It belongs to the radical SAM superfamily. RlmN family. [4Fe-4S] cluster serves as cofactor.

It localises to the cytoplasm. It carries out the reaction adenosine(2503) in 23S rRNA + 2 reduced [2Fe-2S]-[ferredoxin] + 2 S-adenosyl-L-methionine = 2-methyladenosine(2503) in 23S rRNA + 5'-deoxyadenosine + L-methionine + 2 oxidized [2Fe-2S]-[ferredoxin] + S-adenosyl-L-homocysteine. The enzyme catalyses adenosine(37) in tRNA + 2 reduced [2Fe-2S]-[ferredoxin] + 2 S-adenosyl-L-methionine = 2-methyladenosine(37) in tRNA + 5'-deoxyadenosine + L-methionine + 2 oxidized [2Fe-2S]-[ferredoxin] + S-adenosyl-L-homocysteine. Its function is as follows. Specifically methylates position 2 of adenine 2503 in 23S rRNA and position 2 of adenine 37 in tRNAs. This Aquifex aeolicus (strain VF5) protein is Probable dual-specificity RNA methyltransferase RlmN.